A 65-amino-acid polypeptide reads, in one-letter code: Large ribosomal subunit protein bL35 (65 aa).

This sequence belongs to the bacterial ribosomal protein bL35 family.

The chain is Large ribosomal subunit protein bL35 from Aeromonas salmonicida (strain A449).